The following is a 370-amino-acid chain: Heme A synthase (370 aa).

A run of 8 helical transmembrane segments spans residues Val15 to Ala35, Val104 to Pro124, Ala129 to Ala149, Val161 to Leu181, Ala200 to Leu220, Gln261 to Ile280, Gly293 to Leu313, and Pro317 to Leu337. A heme-binding site is contributed by His264. Residue His324 participates in heme binding.

Belongs to the COX15/CtaA family. Type 2 subfamily. In terms of assembly, interacts with CtaB. It depends on heme b as a cofactor.

Its subcellular location is the cell membrane. The catalysed reaction is Fe(II)-heme o + 2 A + H2O = Fe(II)-heme a + 2 AH2. The protein operates within porphyrin-containing compound metabolism; heme A biosynthesis; heme A from heme O: step 1/1. In terms of biological role, catalyzes the conversion of heme O to heme A by two successive hydroxylations of the methyl group at C8. The first hydroxylation forms heme I, the second hydroxylation results in an unstable dihydroxymethyl group, which spontaneously dehydrates, resulting in the formyl group of heme A. The protein is Heme A synthase of Rhodopseudomonas palustris (strain TIE-1).